We begin with the raw amino-acid sequence, 597 residues long: Protein disulfide isomerase-like 1-4 (597 aa).

Residues 1-25 (MAFRVLLLFSLTALLIFSAVSPSFA) form the signal peptide. Composition is skewed to acidic residues over residues 37 to 49 (LSFLEDLKEDDVP) and 61 to 84 (DEFEGGEEEDPDMYNDDDDEEGDF). The disordered stretch occupies residues 37-101 (LSFLEDLKED…SDPLPTPEID (65 aa)). The Thioredoxin 1 domain maps to 85–208 (SDLGNPDSDP…IVTWVKKKIG (124 aa)). N112 carries an N-linked (GlcNAc...) asparagine glycan. Catalysis depends on nucleophile residues C132 and C135. Cysteines 132 and 135 form a disulfide. Residues N213 and N342 are each glycosylated (N-linked (GlcNAc...) asparagine). The 122-residue stretch at 429-550 (FYKSDPIPEK…FYKFLRKHAT (122 aa)) folds into the Thioredoxin 2 domain. Active-site nucleophile residues include C471 and C474. A disulfide bridge links C471 with C474. A glycan (N-linked (GlcNAc...) asparagine) is linked at N524. The segment at 555–597 (LEKPASTESPKTAESTPKVETTETKESPDSTTKSSQSDSKDEL) is disordered. Residues 560 to 573 (STESPKTAESTPKV) show a composition bias toward polar residues. The short motif at 594–597 (KDEL) is the Prevents secretion from ER element.

Belongs to the protein disulfide isomerase family. Interacts with MEE8 and MED37A. Expressed in germinating seedling, including the cotyledons and hypocotyl, in vascular tissues, in pollen grains, root tips, leaf trichomes, developing seeds and siliques.

The protein resides in the endoplasmic reticulum lumen. Its subcellular location is the golgi apparatus. It is found in the vacuole. It localises to the nucleus. The protein localises to the secreted. The protein resides in the cell wall. The catalysed reaction is Catalyzes the rearrangement of -S-S- bonds in proteins.. Functionally, acts as a protein-folding catalyst that interacts with nascent polypeptides to catalyze the formation, isomerization, and reduction or oxidation of disulfide bonds. The polypeptide is Protein disulfide isomerase-like 1-4 (PDIL1-4) (Arabidopsis thaliana (Mouse-ear cress)).